The primary structure comprises 447 residues: MTSKTIFAQSSAKGKAGVAVFRISGSLSLLIVERLCGKFNIVPRKVYYRTIRCYATSQVIDKALIVYFKGEQSFTGEDVVEIHTHGSVAVAKMLTRSILECDGIRLAEPGEFAKRAFLNGKMDLTMAEGLVDLIESETLMQHKQAIRQMEGELEKLYSHWRGMLIKILSFIEGYIDFPDEEIPQSVLREAKSIINNLTREISNHLGDTRKGEVLRHGIVLAITGETNTGKSSLLNYLTMREAAIVSDIPGTTRDVIEAHLDIGGYPIIVRDTAGIRESDDPIEQEGIKRSLVAFKNSDIRILMIDATNINSVNQTIAHLLNDVYTIIVINKIDLVNYKYDSSILPCDKPIVAVSLLKQVGLDRLMSEIVSYAEKIADPGNVPAITRERYRNSLNKALELLQLVNLENDLVLAAEDLRMAIRYLEHITGKIKIDDILAEIFASFCIGK.

(6S)-5-formyl-5,6,7,8-tetrahydrofolate-binding residues include arginine 22, glutamate 81, and lysine 121. In terms of domain architecture, TrmE-type G spans 217 to 373 (GIVLAITGET…LMSEIVSYAE (157 aa)). Asparagine 227 is a K(+) binding site. GTP is bound by residues 227–232 (NTGKSS), 246–252 (SDIPGTT), and 271–274 (DTAG). Residue serine 231 coordinates Mg(2+). Residues serine 246, isoleucine 248, and threonine 251 each coordinate K(+). Residue threonine 252 coordinates Mg(2+). Lysine 447 contacts (6S)-5-formyl-5,6,7,8-tetrahydrofolate.

This sequence belongs to the TRAFAC class TrmE-Era-EngA-EngB-Septin-like GTPase superfamily. TrmE GTPase family. As to quaternary structure, homodimer. Heterotetramer of two MnmE and two MnmG subunits. K(+) is required as a cofactor.

The protein resides in the cytoplasm. Its function is as follows. Exhibits a very high intrinsic GTPase hydrolysis rate. Involved in the addition of a carboxymethylaminomethyl (cmnm) group at the wobble position (U34) of certain tRNAs, forming tRNA-cmnm(5)s(2)U34. The sequence is that of tRNA modification GTPase MnmE from Orientia tsutsugamushi (strain Boryong) (Rickettsia tsutsugamushi).